The following is a 999-amino-acid chain: Cytoplasmic dynein 2 intermediate chain 1 (999 aa).

Basic and acidic residues-rich tracts occupy residues 1–19, 29–138, 146–260, and 268–300; these read MEPG…DDLR, PKEE…EEIR, LLSR…EDRH, and GLHY…KELE. The disordered stretch occupies residues 1–350; the sequence is MEPGKRRTKD…EHEAREKAEE (350 aa). Serine 250 is modified (phosphoserine). Residues 318 to 338 are compositionally biased toward acidic residues; sequence LEDDFVDYEDDFEVCDGDDDS. Basic and acidic residues predominate over residues 339-350; it reads NNEHEAREKAEE. Positions 416–495 are binding to the DYNLT2B-DYNLT1/DYNLT3 dimer; that stretch reads ASHRQKSRSQ…DIQTEDIETR (80 aa). 4 WD repeats span residues 637 to 677, 718 to 764, 850 to 890, and 895 to 935; these read ICES…RIHH, AYKK…KADI, VRPI…PIMQ, and TSGH…LGPV.

It belongs to the dynein light intermediate chain family. As to quaternary structure, intermediate chain of the cytoplasmic dynein complex 2, a multisubunit complex, composed at least of eleven different proteins. The cytoplasmic dynein 2 complex consists of two catalytic heavy chains (HCs) and a number of non-catalytic subunits presented by intermediate chains (ICs), light intermediate chains (LICs) and light chains (LCs). Among them, a heavy chain (DYNC2H1), two intermediate chains (DYNC2I2 and DYNC2I1), a light intermediate chain (DYNC2LI1), and a light chain (DYNLT2B) are unique to the cytoplasmic dynein complex 2, but a subset of the light chains are also shared by dynein-1 and dynein-2 complexes. Interacts with DYNC2I2; their C-terminal domains each bind a copy of the heavy chain, and their extended N-terminal regions are held together by an array of light chain dimers. Interacts with DYNLT2B. Interacts (via the N-terminal half) with DYNLT2B-DYNLT1 dimer or with DYNLT2B-DYNLT3 dimer; this interaction is crucial for retrograde trafficking of ciliary proteins.

It localises to the cell projection. The protein localises to the cilium. It is found in the cytoplasm. The protein resides in the cytoskeleton. Its subcellular location is the microtubule organizing center. It localises to the centrosome. Its function is as follows. Acts as one of several non-catalytic accessory components of the cytoplasmic dynein 2 complex (dynein-2 complex), a motor protein complex that drives the movement of cargos along microtubules within cilia and flagella in concert with the intraflagellar transport (IFT) system. DYNC2I1 plays a major role in retrograde ciliary protein trafficking in cilia and flagella. Also requires to maintain a functional transition zone. The polypeptide is Cytoplasmic dynein 2 intermediate chain 1 (Dync2i1) (Mus musculus (Mouse)).